Reading from the N-terminus, the 185-residue chain is Adenylyl-sulfate kinase (185 aa).

13 to 20 (GLSGAGKS) serves as a coordination point for ATP. Ser-86 acts as the Phosphoserine intermediate in catalysis.

This sequence belongs to the APS kinase family.

The catalysed reaction is adenosine 5'-phosphosulfate + ATP = 3'-phosphoadenylyl sulfate + ADP + H(+). The protein operates within sulfur metabolism; hydrogen sulfide biosynthesis; sulfite from sulfate: step 2/3. Functionally, catalyzes the synthesis of activated sulfate. This Myxococcus xanthus (strain DK1622) protein is Adenylyl-sulfate kinase.